A 111-amino-acid chain; its full sequence is UPF0339 protein ACIAD0721 (111 aa).

2 consecutive repeat copies span residues Ala10–Arg58 and Ala61–Leu109. The interval Ser89–Gly111 is disordered.

Belongs to the UPF0339 family. Duplicated subfamily.

The polypeptide is UPF0339 protein ACIAD0721 (Acinetobacter baylyi (strain ATCC 33305 / BD413 / ADP1)).